The primary structure comprises 177 residues: Large ribosomal subunit protein uL6 (177 aa).

It belongs to the universal ribosomal protein uL6 family. As to quaternary structure, part of the 50S ribosomal subunit.

Functionally, this protein binds to the 23S rRNA, and is important in its secondary structure. It is located near the subunit interface in the base of the L7/L12 stalk, and near the tRNA binding site of the peptidyltransferase center. The polypeptide is Large ribosomal subunit protein uL6 (Methylorubrum extorquens (strain CM4 / NCIMB 13688) (Methylobacterium extorquens)).